The sequence spans 396 residues: GTPase Obg (396 aa).

In terms of domain architecture, Obg spans 1–159 (MKFVDEASIY…RTLKLEMKVL (159 aa)). The disordered stretch occupies residues 120–146 (GGHHGLGNTRFKSSTNRAPRQTTKGTV). A compositionally biased stretch (polar residues) spans 129 to 144 (RFKSSTNRAPRQTTKG). The 174-residue stretch at 160–333 (ADVGLLGLPN…LCLDLMTALD (174 aa)) folds into the OBG-type G domain. GTP contacts are provided by residues 166 to 173 (GLPNAGKS), 191 to 195 (FTTLV), 213 to 216 (DIPG), 283 to 286 (NKTD), and 314 to 316 (SAI). Residues S173 and T193 each contribute to the Mg(2+) site.

Belongs to the TRAFAC class OBG-HflX-like GTPase superfamily. OBG GTPase family. As to quaternary structure, monomer. It depends on Mg(2+) as a cofactor.

It is found in the cytoplasm. Functionally, an essential GTPase which binds GTP, GDP and possibly (p)ppGpp with moderate affinity, with high nucleotide exchange rates and a fairly low GTP hydrolysis rate. Plays a role in control of the cell cycle, stress response, ribosome biogenesis and in those bacteria that undergo differentiation, in morphogenesis control. This Marinomonas sp. (strain MWYL1) protein is GTPase Obg.